Reading from the N-terminus, the 108-residue chain is uncharacterized protein (108 aa).

N-linked (GlcNAc...) asparagine glycosylation is present at N33.

In terms of processing, N-glycosylated.

This is an uncharacterized protein from Saccharomyces cerevisiae (strain ATCC 204508 / S288c) (Baker's yeast).